The sequence spans 95 residues: Exodeoxyribonuclease 7 small subunit (95 aa).

Residues 65-95 form a disordered region; it reads ETINPAETARPAKPENAPESPRMNDLFGTES.

It belongs to the XseB family. Heterooligomer composed of large and small subunits.

It is found in the cytoplasm. The enzyme catalyses Exonucleolytic cleavage in either 5'- to 3'- or 3'- to 5'-direction to yield nucleoside 5'-phosphates.. Functionally, bidirectionally degrades single-stranded DNA into large acid-insoluble oligonucleotides, which are then degraded further into small acid-soluble oligonucleotides. The protein is Exodeoxyribonuclease 7 small subunit of Chlorobaculum tepidum (strain ATCC 49652 / DSM 12025 / NBRC 103806 / TLS) (Chlorobium tepidum).